A 161-amino-acid polypeptide reads, in one-letter code: Leucine-rich colipase-like protein 1 (161 aa).

The signal sequence occupies residues 1-25 (MSVSVWPPLLLLLLLLLLWAVPTFQ).

This chain is Leucine-rich colipase-like protein 1 (Lrcol1), found in Mus musculus (Mouse).